Here is a 255-residue protein sequence, read N- to C-terminus: Phycoerythrobilin:ferredoxin oxidoreductase (255 aa).

The protein belongs to the HY2 family.

It catalyses the reaction (3Z)-phycoerythrobilin + oxidized 2[4Fe-4S]-[ferredoxin] = 15,16-dihydrobiliverdin + reduced 2[4Fe-4S]-[ferredoxin] + 2 H(+). In terms of biological role, catalyzes the two-electron reduction of the C2 and C3(1) diene system of 15,16-dihydrobiliverdin. The sequence is that of Phycoerythrobilin:ferredoxin oxidoreductase (pebB) from Nostoc punctiforme (strain ATCC 29133 / PCC 73102).